Here is a 329-residue protein sequence, read N- to C-terminus: MQEPKHTDPAAMRGAHHRRARSEVAFRLPDDLDLGGGGAGAFDEIGSEDDLFSTFMDIEKISSGPAAAGGSDRDRAAETSSPPRPKHRHSSSVDGSGFFAAARKDAAASLAEVMEAKKAMTPEQLSELAAIDPKRAKRILANRQSAARSKERKARYITELERKVQTLQTEATTLSAQLTLFQRDTTGLSAENAELKIRLQAMEQQAQLRDALNDALKQELERLKLATGEMTNSNETYSMGLQHVPYNTPFFPLAQHNAARQNGGTQLPPQFQPPRPNVPNHMLSHPNGLQDIMQQDPLGRLQGLDISKGPLVVKSESSSISASESSSTF.

2 disordered regions span residues 1–24 (MQEPKHTDPAAMRGAHHRRARSEV) and 62–97 (SSGPAAAGGSDRDRAAETSSPPRPKHRHSSSVDGSG). The 64-residue stretch at 132 to 195 (DPKRAKRILA…TGLSAENAEL (64 aa)) folds into the bZIP domain. Residues 134-155 (KRAKRILANRQSAARSKERKAR) are basic motif. A leucine-zipper region spans residues 160-174 (LERKVQTLQTEATTL). The segment at 260–303 (RQNGGTQLPPQFQPPRPNVPNHMLSHPNGLQDIMQQDPLGRLQG) is disordered.

It belongs to the bZIP family. Binds DNA as a homodimer or as a heterodimer with RF2a. The heterodimer binds stronger to DNA than the homodimer. In terms of tissue distribution, expressed at high levels in roots, low level in leaf sheath, but not in leaf blade. Predominantly expressed in vascular tissues.

It localises to the nucleus. In terms of biological role, transcription factor probably involved in vascular development and shoot tissue organization. Binds to the DNA sequence 5'-CCGAGTGTGCCCCTGG-3' present in the promoter region Box II of the phloem-specific rice tungro bacilliform virus (RTBV) promoter. May regulate tissue-specific expression of the RTBV promoter and virus replication. This chain is Transcription factor RF2b (RF2b), found in Oryza sativa subsp. japonica (Rice).